We begin with the raw amino-acid sequence, 212 residues long: Glycerol-3-phosphate acyltransferase (212 aa).

A run of 6 helical transmembrane segments spans residues 8-28 (IFLS…PFAV), 59-79 (AAAA…LWLA), 90-110 (VFAL…FLGF), 122-142 (ILLA…VIIA), 148-168 (SSLA…FGSG), and 169-189 (VAWY…LLLF).

It belongs to the PlsY family. In terms of assembly, probably interacts with PlsX.

The protein localises to the cell inner membrane. It catalyses the reaction an acyl phosphate + sn-glycerol 3-phosphate = a 1-acyl-sn-glycero-3-phosphate + phosphate. It participates in lipid metabolism; phospholipid metabolism. Its function is as follows. Catalyzes the transfer of an acyl group from acyl-phosphate (acyl-PO(4)) to glycerol-3-phosphate (G3P) to form lysophosphatidic acid (LPA). This enzyme utilizes acyl-phosphate as fatty acyl donor, but not acyl-CoA or acyl-ACP. The protein is Glycerol-3-phosphate acyltransferase of Bordetella petrii (strain ATCC BAA-461 / DSM 12804 / CCUG 43448).